The sequence spans 478 residues: Serine hydroxymethyltransferase, cytosolic (478 aa).

Lys251 carries the N6-(pyridoxal phosphate)lysine modification.

The protein belongs to the SHMT family. As to quaternary structure, homotetramer. Identified in complex with FAM175B and the other subunits of the BRISC complex, at least composed of FAM175B/ABRO1, BRCC3/BRCC36, BABAM2 and BABAM1/NBA1. Pyridoxal 5'-phosphate serves as cofactor.

The protein resides in the cytoplasm. It carries out the reaction (6R)-5,10-methylene-5,6,7,8-tetrahydrofolate + glycine + H2O = (6S)-5,6,7,8-tetrahydrofolate + L-serine. Its pathway is one-carbon metabolism; tetrahydrofolate interconversion. Its function is as follows. Interconversion of serine and glycine. The polypeptide is Serine hydroxymethyltransferase, cytosolic (Shmt1) (Mus musculus (Mouse)).